Consider the following 152-residue polypeptide: Probable flagellum biosynthesis repressor protein FlbT (152 aa).

It belongs to the FlbT family.

Has a post-transcriptional repressor function in flagellum biogenesis. Associates with the 5'-UTR of fljK mRNA and promotes its degradation. This Brucella canis (strain ATCC 23365 / NCTC 10854 / RM-666) protein is Probable flagellum biosynthesis repressor protein FlbT.